Consider the following 349-residue polypeptide: Achromobactin transport system permease protein CbrC (349 aa).

Transmembrane regions (helical) follow at residues 32–52 (LALL…KLML), 82–102 (VLAA…QAMI), 111–131 (ILGI…FLAA), 138–158 (LPLA…WLAW), 168–188 (VLTG…MLVF), 190–210 (PLTT…GASW), 216–236 (LGGW…QVRV), 263–283 (VALA…GLIA), 290–310 (LVAP…AGLV), and 325–345 (DLPA…YLLI).

It belongs to the binding-protein-dependent transport system permease family. FecCD subfamily.

It localises to the cell inner membrane. Part of the binding-protein-dependent transport system CbrABCD for uptake of the siderophore achromobactin. Probably responsible for the translocation of the substrate across the membrane. The polypeptide is Achromobactin transport system permease protein CbrC (cbrC) (Dickeya dadantii (strain 3937) (Erwinia chrysanthemi (strain 3937))).